The following is a 641-amino-acid chain: ATP-dependent zinc metalloprotease FtsH 2 (641 aa).

Over 1–100 the chain is Periplasmic; that stretch reads MLAYYVSVNQ…IDVKVIHNFW (100 aa). The chain crosses the membrane as a helical span at residues 101–121; sequence GQAFLSVLPFLLFILALYFLF. Residues 122 to 641 lie on the Cytoplasmic side of the membrane; it reads RQQIRMAGRG…LLPGLEGAPA (520 aa). 193-200 is a binding site for ATP; sequence GPPGTGKT. Position 415 (His-415) interacts with Zn(2+). The active site involves Glu-416. Zn(2+) is bound by residues His-419 and Asp-491. The tract at residues 593–641 is disordered; it reads KTGKMTNPPSKNSSPVSNGGEASSTKSPARQEETTKDGGLLPGLEGAPA. Composition is skewed to low complexity over residues 599-610 and 630-641; these read NPPSKNSSPVSN and GGLLPGLEGAPA.

This sequence in the central section; belongs to the AAA ATPase family. The protein in the C-terminal section; belongs to the peptidase M41 family. Homohexamer. Requires Zn(2+) as cofactor.

The protein resides in the cell inner membrane. Acts as a processive, ATP-dependent zinc metallopeptidase for both cytoplasmic and membrane proteins. Plays a role in the quality control of integral membrane proteins. The protein is ATP-dependent zinc metalloprotease FtsH 2 of Methylacidiphilum infernorum (isolate V4) (Methylokorus infernorum (strain V4)).